We begin with the raw amino-acid sequence, 114 residues long: Iron-sulfur cluster insertion protein ErpA (114 aa).

3 residues coordinate iron-sulfur cluster: Cys42, Cys106, and Cys108.

Belongs to the HesB/IscA family. Homodimer. Iron-sulfur cluster serves as cofactor.

In terms of biological role, required for insertion of 4Fe-4S clusters for at least IspG. This chain is Iron-sulfur cluster insertion protein ErpA, found in Erwinia tasmaniensis (strain DSM 17950 / CFBP 7177 / CIP 109463 / NCPPB 4357 / Et1/99).